The sequence spans 316 residues: MAPFLVLFLAGVVAASRGDREPVYRDCVTLCERNNCTGSRLTDFRAEQPLYMRVTGWTCLDDCRYQCMWYTVSLYLKEGHEVPQFHGKWPFSRFLFFQEPASALASFLNGVASLLMLLRYRSSVPSSCQMYRTCLAFSMVSVNAWFWSTIFHTRDTALTEKMDYFCASSVILHSIYLCCMRTFGLQYPSIANGFGAFLVLLFACHVSYLTLGRFDYSYNMAANTGFGVLNLMWWLAWCFRRRFHQPYLWKCVLVVISLQSLALLELLDFPPVMWILDAHALWHFSTVPLHFLFYSFLKDDSLYLLKINHDDIPKLD.

The signal sequence occupies residues 1–18; sequence MAPFLVLFLAGVVAASRG. Over 19 to 93 the chain is Lumenal; it reads DREPVYRDCV…QFHGKWPFSR (75 aa). An N-linked (GlcNAc...) asparagine glycan is attached at Asn35. A helical membrane pass occupies residues 94-114; the sequence is FLFFQEPASALASFLNGVASL. Residues 115–132 lie on the Cytoplasmic side of the membrane; sequence LMLLRYRSSVPSSCQMYR. A helical membrane pass occupies residues 133-153; it reads TCLAFSMVSVNAWFWSTIFHT. Over 154–163 the chain is Lumenal; the sequence is RDTALTEKMD. Residues 164–180 form a helical membrane-spanning segment; sequence YFCASSVILHSIYLCCM. Residues 181–182 are Cytoplasmic-facing; it reads RT. A helical membrane pass occupies residues 183–203; that stretch reads FGLQYPSIANGFGAFLVLLFA. At 204–218 the chain is on the lumenal side; it reads CHVSYLTLGRFDYSY. A helical transmembrane segment spans residues 219 to 239; it reads NMAANTGFGVLNLMWWLAWCF. Residues 240–251 lie on the Cytoplasmic side of the membrane; it reads RRRFHQPYLWKC. Residues 252–272 form a helical membrane-spanning segment; it reads VLVVISLQSLALLELLDFPPV. Position 273 (Met273) is a topological domain, lumenal. The helical transmembrane segment at 274-293 threads the bilayer; that stretch reads WILDAHALWHFSTVPLHFLF. The Cytoplasmic segment spans residues 294 to 316; the sequence is YSFLKDDSLYLLKINHDDIPKLD.

It belongs to the PGAP3 family.

Its subcellular location is the golgi apparatus membrane. Its function is as follows. Involved in the fatty acid remodeling steps of GPI-anchor maturation where the unsaturated acyl chain at sn-2 of inositol phosphate is replaced by a saturated stearoyl chain. May catalyze the first step of the fatty acid remodeling, by removing the unsaturated acyl chain at sn-2 of inositol phosphate, generating a lyso-GPI intermediate. The fatty acid remodeling steps is critical for the integration of GPI-APs into lipid rafts. The sequence is that of GPI-specific phospholipase A2-like PGAP3 from Xenopus tropicalis (Western clawed frog).